A 1291-amino-acid polypeptide reads, in one-letter code: Period circadian protein homolog 1 (1291 aa).

Residues 1–134 are disordered; that stretch reads MSGPLEGADG…SSEQSARART (134 aa). The interval 1 to 151 is interaction with BTRC; sequence MSGPLEGADG…LRELKLRLPP (151 aa). Residues 48–115 show a composition bias toward low complexity; sequence NSNGSSGNES…AYSLLSASSE (68 aa). The span at 116–132 shows a compositional bias: polar residues; the sequence is QDNPSTSGCSSEQSARA. Threonine 121 carries the phosphothreonine; by CSNK1E modification. Phosphoserine; by CSNK1E is present on residues serine 122 and serine 126. Positions 138–147 match the Nuclear export signal 1 motif; it reads LMTALRELKL. 2 PAS domains span residues 208-275 and 348-414; these read ITSE…PSRL and YEAP…KILQ. One can recognise a PAC domain in the interval 422 to 465; it reads HSPIRFCARNGEYVTMDTSWAGFVHPWSRKVAFVLGRHKVRTAP. Residues 489–498 carry the Nuclear export signal 2 motif; the sequence is LSEQIHRLLL. 2 disordered regions span residues 508–544 and 647–698; these read GLCGVGPLMSPGPLHSPGSSSDSNGGDAEGPGPPAPV and TKRK…KEPV. Low complexity-rich tracts occupy residues 513-533 and 652-662; these read GPLMSPGPLHSPGSSSDSNGG and ASSSSYTASSA. The required for phosphorylation by CSNK1E stretch occupies residues 596–815; that stretch reads ELEVAPVPDQ…GLDTSSVAPS (220 aa). A phosphoserine mark is found at serine 661, serine 663, and serine 704. 3 disordered regions span residues 749 to 772, 809 to 873, and 938 to 1037; these read GLAPGPAPSPAPSPTVAPDPTPDA, TSSV…PPAT, and SQAP…ALSG. Positions 751-769 are enriched in pro residues; sequence APGPAPSPAPSPTVAPDPT. The residue at position 815 (serine 815) is a Phosphoserine. The Nuclear localization signal signature appears at 824-840; sequence IPPGRRHHCRSKAKRSR. Positions 827-846 are enriched in basic residues; the sequence is GRRHHCRSKAKRSRHHHHQT. Pro residues-rich tracts occupy residues 859–873 and 955–965; these read SPVPSSGPWPPPPAT and PSLPPPPLSPP. Over residues 973-985 the composition is skewed to polar residues; sequence FNSRCSSPLQLNL. Serine 978 and serine 979 each carry phosphoserine. A Nuclear export signal 3 motif is present at residues 981–988; sequence LQLNLLQL. The short motif at 1042 to 1046 is the LXXLL element; it reads LELLL. Low complexity predominate over residues 1051–1061; that stretch reads RSGTGSAASGS. Disordered stretches follow at residues 1051 to 1099 and 1207 to 1291; these read RSGT…YFGS and SVQD…NSTS. Over residues 1062-1076 the composition is skewed to gly residues; sequence LGSGLGSGSGSGSHE. Over residues 1077–1094 the composition is skewed to low complexity; the sequence is GGSTSASITRSSQSSHTS. The segment at 1148 to 1291 is CRY binding domain; it reads SRDAASVLKQ…ALPAEENSTS (144 aa). Residues 1235–1248 show a composition bias toward gly residues; that stretch reads GEGGGCGVGGGGGD. Residues 1253-1267 show a composition bias toward polar residues; that stretch reads AQTQIGAKGSSSQDS.

Homodimer. Component of the circadian core oscillator, which includes the CRY proteins, CLOCK or NPAS2, BMAL1 or BMAL2, CSNK1D and/or CSNK1E, TIMELESS, and the PER proteins. Interacts directly with TIMELESS. Interacts directly with PER2, PER3, CRY1 and CRY2. Interacts with BMAL1 and CLOCK. Interacts with GPRASP1. Interacts (phosphorylated) with BTRC and FBXW11; the interactions trigger proteasomal degradation. Interacts with NONO and SFPQ. Interacts with WDR5. Interacts with U2AF1L4 (Isoform 3). Interacts with USP2. Interacts with HNF4A. Phosphorylated on serine residues by CSNK1D, CSNK1E and probably also by CSNK1G2. Phosphorylation by CSNK1D or CSNK1E promotes nuclear location of PER proteins as well as ubiquitination and subsequent degradation. May be dephosphorylated by PP1. In terms of processing, ubiquitinated; requires phosphorylation by CSNK1E and interaction with BTRC and FBXW11. Deubiquitinated by USP2. In brain, highest expression is observed in the SCN. Highly expressed in the pyramidal cell layer of the piriform cortex, the periventricular part of the caudate-putamen, many thalamic nuclei, and the granular layer of the cerebellar cortex. Weaker expression is detected in most area of the brain, including cortical and non cortical structures. Expression but no oscillations occurs in the glomerular and mitral cell layers of the olfactory bulb, the internal granular layer of the cerebellum, the cornu ammonis and dentate gyrus of the hippocampus, the cerebral and piriform cortices. Expressed in the renal cortex (at protein level). Also found in heart, brain, bladder, lumbar spinal cord, spleen, lung, liver, skeletal muscle and testis.

It is found in the nucleus. It localises to the cytoplasm. Functionally, transcriptional repressor which forms a core component of the circadian clock. The circadian clock, an internal time-keeping system, regulates various physiological processes through the generation of approximately 24 hour circadian rhythms in gene expression, which are translated into rhythms in metabolism and behavior. It is derived from the Latin roots 'circa' (about) and 'diem' (day) and acts as an important regulator of a wide array of physiological functions including metabolism, sleep, body temperature, blood pressure, endocrine, immune, cardiovascular, and renal function. Consists of two major components: the central clock, residing in the suprachiasmatic nucleus (SCN) of the brain, and the peripheral clocks that are present in nearly every tissue and organ system. Both the central and peripheral clocks can be reset by environmental cues, also known as Zeitgebers (German for 'timegivers'). The predominant Zeitgeber for the central clock is light, which is sensed by retina and signals directly to the SCN. The central clock entrains the peripheral clocks through neuronal and hormonal signals, body temperature and feeding-related cues, aligning all clocks with the external light/dark cycle. Circadian rhythms allow an organism to achieve temporal homeostasis with its environment at the molecular level by regulating gene expression to create a peak of protein expression once every 24 hours to control when a particular physiological process is most active with respect to the solar day. Transcription and translation of core clock components (CLOCK, NPAS2, BMAL1, BMAL2, PER1, PER2, PER3, CRY1 and CRY2) plays a critical role in rhythm generation, whereas delays imposed by post-translational modifications (PTMs) are important for determining the period (tau) of the rhythms (tau refers to the period of a rhythm and is the length, in time, of one complete cycle). A diurnal rhythm is synchronized with the day/night cycle, while the ultradian and infradian rhythms have a period shorter and longer than 24 hours, respectively. Disruptions in the circadian rhythms contribute to the pathology of cardiovascular diseases, cancer, metabolic syndromes and aging. A transcription/translation feedback loop (TTFL) forms the core of the molecular circadian clock mechanism. Transcription factors, CLOCK or NPAS2 and BMAL1 or BMAL2, form the positive limb of the feedback loop, act in the form of a heterodimer and activate the transcription of core clock genes and clock-controlled genes (involved in key metabolic processes), harboring E-box elements (5'-CACGTG-3') within their promoters. The core clock genes: PER1/2/3 and CRY1/2 which are transcriptional repressors form the negative limb of the feedback loop and interact with the CLOCK|NPAS2-BMAL1|BMAL2 heterodimer inhibiting its activity and thereby negatively regulating their own expression. This heterodimer also activates nuclear receptors NR1D1/2 and RORA/B/G, which form a second feedback loop and which activate and repress BMAL1 transcription, respectively. Regulates circadian target genes expression at post-transcriptional levels, but may not be required for the repression at transcriptional level. Controls PER2 protein decay. Represses CRY2 preventing its repression on CLOCK/BMAL1 target genes such as FXYD5 and SCNN1A in kidney and PPARA in liver. Besides its involvement in the maintenance of the circadian clock, has an important function in the regulation of several processes. Participates in the repression of glucocorticoid receptor NR3C1/GR-induced transcriptional activity by reducing the association of NR3C1/GR to glucocorticoid response elements (GREs) by BMAL1:CLOCK. Plays a role in the modulation of the neuroinflammatory state via the regulation of inflammatory mediators release, such as CCL2 and IL6. In spinal astrocytes, negatively regulates the MAPK14/p38 and MAPK8/JNK MAPK cascades as well as the subsequent activation of NFkappaB. Coordinately regulates the expression of multiple genes that are involved in the regulation of renal sodium reabsorption. Can act as gene expression activator in a gene and tissue specific manner, in kidney enhances WNK1 and SLC12A3 expression in collaboration with CLOCK. Modulates hair follicle cycling. Represses the CLOCK-BMAL1 induced transcription of BHLHE40/DEC1. The chain is Period circadian protein homolog 1 (Per1) from Mus musculus (Mouse).